Reading from the N-terminus, the 252-residue chain is 3-dehydroquinate dehydratase (252 aa).

Residues 46 to 48 (EWR) and arginine 82 contribute to the 3-dehydroquinate site. The active-site Proton donor/acceptor is histidine 143. The active-site Schiff-base intermediate with substrate is lysine 170. Residues arginine 212, serine 231, and glutamine 235 each coordinate 3-dehydroquinate.

Belongs to the type-I 3-dehydroquinase family. In terms of assembly, homodimer.

It catalyses the reaction 3-dehydroquinate = 3-dehydroshikimate + H2O. The protein operates within metabolic intermediate biosynthesis; chorismate biosynthesis; chorismate from D-erythrose 4-phosphate and phosphoenolpyruvate: step 3/7. Involved in the third step of the chorismate pathway, which leads to the biosynthesis of aromatic amino acids. Catalyzes the cis-dehydration of 3-dehydroquinate (DHQ) and introduces the first double bond of the aromatic ring to yield 3-dehydroshikimate. The chain is 3-dehydroquinate dehydratase from Listeria welshimeri serovar 6b (strain ATCC 35897 / DSM 20650 / CCUG 15529 / CIP 8149 / NCTC 11857 / SLCC 5334 / V8).